Consider the following 550-residue polypeptide: Iduronate 2-sulfatase (550 aa).

An N-terminal signal peptide occupies residues 1–25 (MPPPRTGRGLLWLGLVLSSVCVALG). Positions 26 to 33 (SETQANST) are excised as a propeptide. Ca(2+) is bound by residues Asp45, Asp46, and Cys84. Cys84 (nucleophile) is an active-site residue. Cys84 is modified (3-oxoalanine (Cys)). A glycan (N-linked (GlcNAc...) asparagine) is linked at Asn115. His138 is a catalytic residue. N-linked (GlcNAc...) asparagine glycosylation occurs at Asn144. The cysteines at positions 171 and 184 are disulfide-linked. N-linked (GlcNAc...) asparagine glycans are attached at residues Asn246, Asn280, and Asn325. Residues Asp334 and His335 each contribute to the Ca(2+) site. Residues Cys422 and Cys432 are joined by a disulfide bond. Residues Asn513 and Asn537 are each glycosylated (N-linked (GlcNAc...) asparagine).

It belongs to the sulfatase family. In terms of assembly, monomer. The 58-kDa mature form is composed of two chains resulting from proteolitic processing, the 42-kDa chain and the 14-kDa chain that remain stably associated and form the 58-kDa intermediate form which is enzymatically active. It depends on Ca(2+) as a cofactor. Post-translationally, synthesized as a 75-kDa precursor form in the endoplasmic reticulum (ER), and then processed by proteolytic cleavage through various intermediates to yield a 55-kDa mature form, with the release of an 18 kDa polypeptide. In terms of processing, the conversion to 3-oxoalanine (also known as C-formylglycine, FGly), of a serine or cysteine residue in prokaryotes and of a cysteine residue in eukaryotes, is critical for catalytic activity. Liver, kidney, lung, and placenta.

It localises to the lysosome. It carries out the reaction Hydrolysis of the 2-sulfate groups of the L-iduronate 2-sulfate units of dermatan sulfate, heparan sulfate and heparin.. Lysosomal enzyme involved in the degradation pathway of dermatan sulfate and heparan sulfate. This Homo sapiens (Human) protein is Iduronate 2-sulfatase (IDS).